The chain runs to 209 residues: Ribosomal RNA large subunit methyltransferase E (209 aa).

Glycine 63, tryptophan 65, aspartate 83, aspartate 99, and aspartate 124 together coordinate S-adenosyl-L-methionine. Lysine 164 (proton acceptor) is an active-site residue.

Belongs to the class I-like SAM-binding methyltransferase superfamily. RNA methyltransferase RlmE family.

It localises to the cytoplasm. The catalysed reaction is uridine(2552) in 23S rRNA + S-adenosyl-L-methionine = 2'-O-methyluridine(2552) in 23S rRNA + S-adenosyl-L-homocysteine + H(+). Specifically methylates the uridine in position 2552 of 23S rRNA at the 2'-O position of the ribose in the fully assembled 50S ribosomal subunit. This chain is Ribosomal RNA large subunit methyltransferase E, found in Alkalilimnicola ehrlichii (strain ATCC BAA-1101 / DSM 17681 / MLHE-1).